A 1002-amino-acid polypeptide reads, in one-letter code: E3 ubiquitin-protein ligase BRE1B (1002 aa).

Positions 1 to 32 (MSGLSNKRAAGDGGSGPPEKKLNREEKTTTTL) are disordered. Basic and acidic residues predominate over residues 18–28 (PEKKLNREEKT). Lys-20 is modified (N6-acetyllysine). Ser-42 carries the post-translational modification Phosphoserine. Residues 55 to 91 (KNKKLAERLEQRQACEDELRERIEKLEKRQATDDATL) are a coiled coil. The interval 120–148 (SSGTEVPGCQEGLTRDVIPRTDPGTSDLR) is disordered. Coiled coils occupy residues 190–378 (KAAV…LRSL) and 438–526 (LQKK…ASGS). Residues Lys-356 and Lys-518 each carry the N6-acetyllysine modification. 2 disordered regions span residues 520-562 (RAQA…PDSK) and 579-652 (KKEE…ESEL). Glycyl lysine isopeptide (Lys-Gly) (interchain with G-Cter in SUMO2) cross-links involve residues Lys-579 and Lys-580. Ser-585 and Ser-586 each carry phosphoserine. Composition is skewed to basic and acidic residues over residues 603–620 (RGRE…EREG) and 634–652 (RADR…ESEL). Positions 628–947 (AASTLSRADR…EEIKEYKARL (320 aa)) form a coiled coil. Residues 949–988 (CPCCNTRKKDAVLTKCFHVFCFECVRGRYEARQRKCPKCN) form an RING-type zinc finger.

Belongs to the BRE1 family. In terms of assembly, component of the RNF20/40 complex (also known as BRE1 complex) probably composed of 2 copies of RNF20/BRE1A and 2 copies of RNF40/BRE1B. Interacts with UBE2E1/UBCH6. Interacts with RB1 and WAC. May interact with STX1A. Ubiquitously expressed. Expressed in brain, testis, heart, liver and kidney. Weakly expressed in lung, spleen and skeletal muscle (at protein level).

It localises to the nucleus. The catalysed reaction is S-ubiquitinyl-[E2 ubiquitin-conjugating enzyme]-L-cysteine + [acceptor protein]-L-lysine = [E2 ubiquitin-conjugating enzyme]-L-cysteine + N(6)-ubiquitinyl-[acceptor protein]-L-lysine.. Its pathway is protein modification; protein ubiquitination. Functionally, component of the RNF20/40 E3 ubiquitin-protein ligase complex that mediates monoubiquitination of 'Lys-120' of histone H2B (H2BK120ub1). H2BK120ub1 gives a specific tag for epigenetic transcriptional activation and is also prerequisite for histone H3 'Lys-4' and 'Lys-79' methylation (H3K4me and H3K79me, respectively). It thereby plays a central role in histone code and gene regulation. The RNF20/40 complex forms a H2B ubiquitin ligase complex in cooperation with the E2 enzyme UBE2A or UBE2B; reports about the cooperation with UBE2E1/UBCH are contradictory. Required for transcriptional activation of Hox genes. In Rattus norvegicus (Rat), this protein is E3 ubiquitin-protein ligase BRE1B (Rnf40).